The following is a 536-amino-acid chain: Butyrophilin-like protein 9 (536 aa).

The first 35 residues, 1–35 (MADFSVFLGFLKQIPRCLSIFFTYLLFLQLWEVNS), serve as a signal peptide directing secretion. 2 Ig-like V-type domains span residues 36 to 149 (DKVW…WELE) and 152 to 241 (GSGS…KEFV). The Extracellular portion of the chain corresponds to 36-257 (DKVWVLGPEE…FLPRMSPWKK (222 aa)). Cysteines 59 and 133 form a disulfide. N-linked (GlcNAc...) asparagine glycosylation is found at asparagine 102, asparagine 139, and asparagine 224. Cysteines 173 and 227 form a disulfide. The helical transmembrane segment at 258–278 (AFVGTLVVLPLSLIVLTMLAL) threads the bilayer. Topologically, residues 279–536 (RYFYKLRSFQ…PAWAVNEAVS (258 aa)) are cytoplasmic. In terms of domain architecture, B30.2/SPRY spans 307 to 506 (DWRRSEGQAE…MTICSLPVRG (200 aa)).

It belongs to the immunoglobulin superfamily. BTN/MOG family.

It localises to the membrane. The polypeptide is Butyrophilin-like protein 9 (Btnl9) (Mus musculus (Mouse)).